The primary structure comprises 177 residues: Large ribosomal subunit protein uL6 (177 aa).

Belongs to the universal ribosomal protein uL6 family. Part of the 50S ribosomal subunit.

In terms of biological role, this protein binds to the 23S rRNA, and is important in its secondary structure. It is located near the subunit interface in the base of the L7/L12 stalk, and near the tRNA binding site of the peptidyltransferase center. This is Large ribosomal subunit protein uL6 from Rickettsia peacockii (strain Rustic).